We begin with the raw amino-acid sequence, 239 residues long: Insulin-like growth factor-binding protein 3 receptor (239 aa).

Positions 1–38 (MGSCQAGHYLHFCLAHHPPLVCATLILLLLGLSGLGLG) are cleaved as a signal peptide. The Extracellular portion of the chain corresponds to 39-205 (GFLLTHRTDL…EELTLCGSRL (167 aa)). N-linked (GlcNAc...) asparagine glycans are attached at residues Asn-101 and Asn-167. A helical transmembrane segment spans residues 206-226 (LVLGFFLILFCGLCCLTAACF). The Cytoplasmic portion of the chain corresponds to 227–239 (HPRRESHWSRTRL).

In terms of assembly, interacts with IGFBP3. Interacts with CASP8.

It is found in the cell membrane. Its function is as follows. Cell death receptor specific for IGFBP3, may mediate caspase-8-dependent apoptosis upon ligand binding. This Bos taurus (Bovine) protein is Insulin-like growth factor-binding protein 3 receptor (TMEM219).